The sequence spans 382 residues: F-box protein At3g19470 (382 aa).

Residues 1–44 enclose the F-box domain; the sequence is MYNLPRDLPEEVLCRIPLTSLRPVRSTCKKWSTLSKCGSFAKKH.

The polypeptide is F-box protein At3g19470 (Arabidopsis thaliana (Mouse-ear cress)).